The following is a 67-amino-acid chain: Large ribosomal subunit protein uL29 (67 aa).

It belongs to the universal ribosomal protein uL29 family.

The polypeptide is Large ribosomal subunit protein uL29 (Wolbachia pipientis subsp. Culex pipiens (strain wPip)).